The sequence spans 211 residues: MDGLRQRVEHFLEQRNLVTEVLGALEAKTGVEKRYLAAGAVTLLSLYLLFGYGASLLCNLIGFVYPAYASIKAIESPSKDDDTVWLTYWVVYALFGLAEFFSDLLLSWFPFYYVGKCAFLLFCMAPRPWNGALMLYQRVVRPLFLRHHGAVDRIMNDLSGRALDAAAGITRNVLQVLARSRAGITPVAVAGPSTPLEADLKPSQTPQPKDK.

The next 2 membrane-spanning stretches (helical) occupy residues 44 to 64 (LSLY…IGFV) and 89 to 109 (WVVY…LSWF). Positions 190–211 (AGPSTPLEADLKPSQTPQPKDK) are disordered. A compositionally biased stretch (polar residues) spans 202–211 (PSQTPQPKDK).

This sequence belongs to the DP1 family. As to quaternary structure, interacts with STX3. Interacts with clathrin. In terms of tissue distribution, expressed in circumvallate papillae and testis. Expressed in the retina. Isoform 1 is predominantly present in mature optic cups. Isoform 1 expression is confined to the cell body and inner segment of developing rod photoreceptor cells.

The protein resides in the endoplasmic reticulum membrane. It is found in the cytoplasmic vesicle. It localises to the clathrin-coated vesicle membrane. Its function is as follows. Required for correct function and survival of retinal photoreceptors. Required for retinal development. In rod photoreceptors, facilitates stability and/or trafficking of guanylate cyclases and is required to maintain endoplasmic reticulum and mitochondrial homeostasis. May play a role in clathrin-coated intracellular vesicle trafficking of proteins from the endoplasmic reticulum to the retinal rod plasma membrane. This Homo sapiens (Human) protein is Receptor expression-enhancing protein 6 (REEP6).